A 277-amino-acid polypeptide reads, in one-letter code: Shikimate dehydrogenase (NADP(+)) (277 aa).

Residues Ser15 to Ser17 and Thr62 contribute to the shikimate site. The active-site Proton acceptor is Lys66. Glu78 contacts NADP(+). Asn87 and Asp103 together coordinate shikimate. Residues Gly127–Ala131, Asn151–Lys156, and Gly238 contribute to the NADP(+) site.

The protein belongs to the shikimate dehydrogenase family. As to quaternary structure, homodimer.

The catalysed reaction is shikimate + NADP(+) = 3-dehydroshikimate + NADPH + H(+). Its pathway is metabolic intermediate biosynthesis; chorismate biosynthesis; chorismate from D-erythrose 4-phosphate and phosphoenolpyruvate: step 4/7. Involved in the biosynthesis of the chorismate, which leads to the biosynthesis of aromatic amino acids. Catalyzes the reversible NADPH linked reduction of 3-dehydroshikimate (DHSA) to yield shikimate (SA). This is Shikimate dehydrogenase (NADP(+)) from Shewanella frigidimarina (strain NCIMB 400).